Reading from the N-terminus, the 359-residue chain is CMP-N-acetylneuraminate-poly-alpha-2,8-sialyltransferase (359 aa).

Topologically, residues 1–7 are cytoplasmic; the sequence is MRSIRKR. The chain crosses the membrane as a helical; Signal-anchor for type II membrane protein span at residues 8-20; the sequence is WTICTISLLLIFY. The Lumenal portion of the chain corresponds to 21–359; the sequence is KTKEMARTEE…KLTTGKCIKQ (339 aa). 3 N-linked (GlcNAc...) asparagine glycosylation sites follow: asparagine 50, asparagine 74, and asparagine 119. Disulfide bonds link cysteine 142/cysteine 292 and cysteine 156/cysteine 356. CMP-N-acetyl-beta-neuraminate is bound by residues asparagine 147 and asparagine 170. N-linked (GlcNAc...) asparagine glycosylation is found at asparagine 204 and asparagine 219. 4 residues coordinate CMP-N-acetyl-beta-neuraminate: serine 279, threonine 280, glycine 281, and tryptophan 301. Residue histidine 331 is the Proton donor/acceptor of the active site.

Belongs to the glycosyltransferase 29 family. In terms of processing, autopolysialylated.

The protein resides in the golgi apparatus membrane. The protein localises to the secreted. It carries out the reaction [N-acetyl-alpha-D-neuraminosyl-(2-&gt;8)](n) + CMP-N-acetyl-beta-neuraminate = [N-acetyl-alpha-D-neuraminosyl-(2-&gt;8)](n+1) + CMP + H(+). Catalyzes the transfer of a sialic acid from a CMP-linked sialic acid donor onto a terminal alpha-2,3-, alpha-2,6-, or alpha-2,8-linked sialic acid of an N-linked glycan protein acceptor through alpha-2,8-linkages. Therefore, participates in polysialic acid synthesis on various sialylated N-acetyllactosaminyl oligosaccharides, including NCAM1 N-glycans, FETUB N-glycans and AHSG. It is noteworthy that alpha-2,3-linked sialic acid is apparently a better acceptor than alpha-2,6-linked sialic acid. This is CMP-N-acetylneuraminate-poly-alpha-2,8-sialyltransferase (ST8SIA4) from Bos taurus (Bovine).